Here is a 248-residue protein sequence, read N- to C-terminus: Exosome complex component Rrp41 (248 aa).

It belongs to the RNase PH family. Rrp41 subfamily. As to quaternary structure, component of the archaeal exosome complex. Forms a hexameric ring-like arrangement composed of 3 Rrp41-Rrp42 heterodimers. The hexameric ring associates with a trimer of Rrp4 and/or Csl4 subunits.

It localises to the cytoplasm. Functionally, catalytic component of the exosome, which is a complex involved in RNA degradation. Has 3'-&gt;5' exoribonuclease activity. Can also synthesize heteromeric RNA-tails. Binds RNA. This chain is Exosome complex component Rrp41, found in Saccharolobus solfataricus (strain ATCC 35092 / DSM 1617 / JCM 11322 / P2) (Sulfolobus solfataricus).